A 528-amino-acid polypeptide reads, in one-letter code: Na(+)/H(+) antiporter NhaB (528 aa).

The next 10 helical transmembrane spans lie at 20–39 (WFKI…FYFN), 66–86 (PGGL…SQVL), 97–117 (LLLV…LFVF), 139–159 (AFLS…TVAV), 241–261 (IRMS…CFLV), 304–324 (AVIG…VGLI), 349–369 (EEAL…AVII), 390–410 (LVIF…VFVG), 448–468 (ATPN…APLI), and 476–496 (VWMA…AIQL).

It belongs to the NhaB Na(+)/H(+) (TC 2.A.34) antiporter family.

The protein localises to the cell inner membrane. The catalysed reaction is 2 Na(+)(in) + 3 H(+)(out) = 2 Na(+)(out) + 3 H(+)(in). In terms of biological role, na(+)/H(+) antiporter that extrudes sodium in exchange for external protons. The protein is Na(+)/H(+) antiporter NhaB of Shewanella pealeana (strain ATCC 700345 / ANG-SQ1).